A 380-amino-acid polypeptide reads, in one-letter code: uncharacterized protein (380 aa).

This is an uncharacterized protein from Methanocaldococcus jannaschii (strain ATCC 43067 / DSM 2661 / JAL-1 / JCM 10045 / NBRC 100440) (Methanococcus jannaschii).